We begin with the raw amino-acid sequence, 264 residues long: S-adenosylmethionine decarboxylase proenzyme (264 aa).

Ser111 acts as the Schiff-base intermediate with substrate; via pyruvic acid in catalysis. Residue Ser111 is modified to Pyruvic acid (Ser); by autocatalysis. The active-site Proton acceptor; for processing activity is the His116. Catalysis depends on Cys139, which acts as the Proton donor; for catalytic activity.

Belongs to the prokaryotic AdoMetDC family. Type 2 subfamily. Heterooctamer of four alpha and four beta chains arranged as a tetramer of alpha/beta heterodimers. Pyruvate serves as cofactor. In terms of processing, is synthesized initially as an inactive proenzyme. Formation of the active enzyme involves a self-maturation process in which the active site pyruvoyl group is generated from an internal serine residue via an autocatalytic post-translational modification. Two non-identical subunits are generated from the proenzyme in this reaction, and the pyruvate is formed at the N-terminus of the alpha chain, which is derived from the carboxyl end of the proenzyme. The post-translation cleavage follows an unusual pathway, termed non-hydrolytic serinolysis, in which the side chain hydroxyl group of the serine supplies its oxygen atom to form the C-terminus of the beta chain, while the remainder of the serine residue undergoes an oxidative deamination to produce ammonia and the pyruvoyl group blocking the N-terminus of the alpha chain.

The catalysed reaction is S-adenosyl-L-methionine + H(+) = S-adenosyl 3-(methylsulfanyl)propylamine + CO2. It participates in amine and polyamine biosynthesis; S-adenosylmethioninamine biosynthesis; S-adenosylmethioninamine from S-adenosyl-L-methionine: step 1/1. Catalyzes the decarboxylation of S-adenosylmethionine to S-adenosylmethioninamine (dcAdoMet), the propylamine donor required for the synthesis of the polyamines spermine and spermidine from the diamine putrescine. This Geobacillus kaustophilus (strain HTA426) protein is S-adenosylmethionine decarboxylase proenzyme.